We begin with the raw amino-acid sequence, 987 residues long: Ephrin type-B receptor 4 (987 aa).

Residues 1–15 (MELRALLCWASLATA) form the signal peptide. Residues 16 to 539 (LEETLLNTKL…ESESWREQLA (524 aa)) are Extracellular-facing. The 186-residue stretch at 17 to 202 (EETLLNTKLE…FYKKCSWLIT (186 aa)) folds into the Eph LBD domain. Disulfide bonds link Cys-61–Cys-184 and Cys-97–Cys-107. 3 N-linked (GlcNAc...) asparagine glycosylation sites follow: Asn-203, Asn-335, and Asn-426. 2 consecutive Fibronectin type-III domains span residues 323-432 (PPSA…TDRE) and 436-529 (AVSD…TQLD). A helical membrane pass occupies residues 540–560 (LIAGTAVVGVVLVLVVVIIAV). Topologically, residues 561–987 (LCLRKQSNGR…GGTGGPAQQF (427 aa)) are cytoplasmic. The region spanning 615 to 899 (VKIEEVIGAG…ENGGASHPLL (285 aa)) is the Protein kinase domain. Residues 621-629 (IGAGEFGEV) and Lys-647 contribute to the ATP site. Asp-740 functions as the Proton acceptor in the catalytic mechanism. Phosphoserine occurs at positions 769, 770, 911, and 943. In terms of domain architecture, SAM spans 907-971 (SAFGSVGEWL…LASVQHMKSQ (65 aa)). Residues 965 to 987 (VQHMKSQAKPGAPGGTGGPAQQF) form a disordered region. Gly residues predominate over residues 976 to 987 (APGGTGGPAQQF). A PDZ-binding motif is present at residues 985–987 (QQF).

This sequence belongs to the protein kinase superfamily. Tyr protein kinase family. Ephrin receptor subfamily. As to quaternary structure, heterotetramer upon binding of the ligand. The heterotetramer is composed of an ephrin dimer and a receptor dimer. Oligomerization is probably required to induce biological responses. Interacts with RASA1; the interaction depends on EPHB4 tyrosine-phosphorylation. Phosphorylated; autophosphorylation is stimulated by EFNB2. As to expression, expressed in various organ systems, including lung, liver, kidney, intestine, muscle and heart. Expressed in myogenic progenitor cells.

It localises to the cell membrane. The enzyme catalyses L-tyrosyl-[protein] + ATP = O-phospho-L-tyrosyl-[protein] + ADP + H(+). In terms of biological role, receptor tyrosine kinase which binds promiscuously transmembrane ephrin-B family ligands residing on adjacent cells, leading to contact-dependent bidirectional signaling into neighboring cells. The signaling pathway downstream of the receptor is referred to as forward signaling while the signaling pathway downstream of the ephrin ligand is referred to as reverse signaling. Together with its cognate ligand/functional ligand EFNB2 it is involved in the regulation of cell adhesion and migration, and plays a central role in heart morphogenesis, angiogenesis and blood vessel remodeling and permeability. EPHB4-mediated forward signaling controls cellular repulsion and segregation from EFNB2-expressing cells. The sequence is that of Ephrin type-B receptor 4 (Ephb4) from Mus musculus (Mouse).